The sequence spans 186 residues: Elongation factor P (186 aa).

It belongs to the elongation factor P family.

The protein localises to the cytoplasm. It participates in protein biosynthesis; polypeptide chain elongation. Involved in peptide bond synthesis. Stimulates efficient translation and peptide-bond synthesis on native or reconstituted 70S ribosomes in vitro. Probably functions indirectly by altering the affinity of the ribosome for aminoacyl-tRNA, thus increasing their reactivity as acceptors for peptidyl transferase. The sequence is that of Elongation factor P from Prochlorococcus marinus (strain MIT 9515).